The primary structure comprises 331 residues: Biotin synthase (331 aa).

The region spanning 51-278 (QTIQLSTLMS…KSYVRLSAGR (228 aa)) is the Radical SAM core domain. Residues Cys-66, Cys-70, and Cys-73 each contribute to the [4Fe-4S] cluster site. 4 residues coordinate [2Fe-2S] cluster: Cys-110, Cys-141, Cys-201, and Arg-273.

This sequence belongs to the radical SAM superfamily. Biotin synthase family. In terms of assembly, homodimer. Requires [4Fe-4S] cluster as cofactor. [2Fe-2S] cluster serves as cofactor.

It catalyses the reaction (4R,5S)-dethiobiotin + (sulfur carrier)-SH + 2 reduced [2Fe-2S]-[ferredoxin] + 2 S-adenosyl-L-methionine = (sulfur carrier)-H + biotin + 2 5'-deoxyadenosine + 2 L-methionine + 2 oxidized [2Fe-2S]-[ferredoxin]. It participates in cofactor biosynthesis; biotin biosynthesis; biotin from 7,8-diaminononanoate: step 2/2. Functionally, catalyzes the conversion of dethiobiotin (DTB) to biotin by the insertion of a sulfur atom into dethiobiotin via a radical-based mechanism. This is Biotin synthase from Histophilus somni (strain 129Pt) (Haemophilus somnus).